The following is a 661-amino-acid chain: UvrABC system protein B (661 aa).

The Helicase ATP-binding domain maps to 28–414; sequence KGVKEGKRHQ…HTDEMIEQII (387 aa). 41–48 serves as a coordination point for ATP; sequence GATGTGKT. The short motif at 94-117 is the Beta-hairpin element; the sequence is YYDYYQPEAYVPSTDTFIEKDASI. Positions 432–598 constitute a Helicase C-terminal domain; sequence QIDDLLSEIQ…TINKKIHDVI (167 aa). The disordered stretch occupies residues 604–625; it reads NDETNEKQQTELPKKMTKKERQ. Residues 607–617 are compositionally biased toward basic and acidic residues; sequence TNEKQQTELPK. The region spanning 625–660 is the UVR domain; that stretch reads QKTIENIEKEMKKAAKDLDFEKATELRDMLFELKSE.

The protein belongs to the UvrB family. As to quaternary structure, forms a heterotetramer with UvrA during the search for lesions. Interacts with UvrC in an incision complex.

It localises to the cytoplasm. The UvrABC repair system catalyzes the recognition and processing of DNA lesions. A damage recognition complex composed of 2 UvrA and 2 UvrB subunits scans DNA for abnormalities. Upon binding of the UvrA(2)B(2) complex to a putative damaged site, the DNA wraps around one UvrB monomer. DNA wrap is dependent on ATP binding by UvrB and probably causes local melting of the DNA helix, facilitating insertion of UvrB beta-hairpin between the DNA strands. Then UvrB probes one DNA strand for the presence of a lesion. If a lesion is found the UvrA subunits dissociate and the UvrB-DNA preincision complex is formed. This complex is subsequently bound by UvrC and the second UvrB is released. If no lesion is found, the DNA wraps around the other UvrB subunit that will check the other stand for damage. This chain is UvrABC system protein B, found in Staphylococcus haemolyticus (strain JCSC1435).